We begin with the raw amino-acid sequence, 513 residues long: ATP synthase subunit alpha (513 aa).

ATP is bound at residue G169 to T176.

The protein belongs to the ATPase alpha/beta chains family. F-type ATPases have 2 components, CF(1) - the catalytic core - and CF(0) - the membrane proton channel. CF(1) has five subunits: alpha(3), beta(3), gamma(1), delta(1), epsilon(1). CF(0) has three main subunits: a(1), b(2) and c(9-12). The alpha and beta chains form an alternating ring which encloses part of the gamma chain. CF(1) is attached to CF(0) by a central stalk formed by the gamma and epsilon chains, while a peripheral stalk is formed by the delta and b chains.

The protein resides in the cell inner membrane. The catalysed reaction is ATP + H2O + 4 H(+)(in) = ADP + phosphate + 5 H(+)(out). Functionally, produces ATP from ADP in the presence of a proton gradient across the membrane. The alpha chain is a regulatory subunit. In Bordetella bronchiseptica (strain ATCC BAA-588 / NCTC 13252 / RB50) (Alcaligenes bronchisepticus), this protein is ATP synthase subunit alpha.